The sequence spans 135 residues: ATP synthase epsilon chain (135 aa).

Belongs to the ATPase epsilon chain family. As to quaternary structure, F-type ATPases have 2 components, CF(1) - the catalytic core - and CF(0) - the membrane proton channel. CF(1) has five subunits: alpha(3), beta(3), gamma(1), delta(1), epsilon(1). CF(0) has three main subunits: a, b and c.

It is found in the cell inner membrane. Produces ATP from ADP in the presence of a proton gradient across the membrane. In Rhizobium johnstonii (strain DSM 114642 / LMG 32736 / 3841) (Rhizobium leguminosarum bv. viciae), this protein is ATP synthase epsilon chain.